Consider the following 169-residue polypeptide: Neudesin (169 aa).

A signal peptide spans 1-28; sequence MAGPAPGRRLVALALIVALAVGLPTAGA. Residues 41–126 enclose the Cytochrome b5 heme-binding domain; it reads VRLFTEEELA…EELESLDDVF (86 aa). Lysine 133 is modified (N6-acetyllysine). A disordered region spans residues 148-169; that stretch reads DGSPNLDFKPEDQPHFDIKDEF. The span at 155–169 shows a compositional bias: basic and acidic residues; the sequence is FKPEDQPHFDIKDEF.

Belongs to the cytochrome b5 family. MAPR subfamily. As to quaternary structure, interacts with PINK1 and PARK7.

It localises to the secreted. It is found in the extracellular space. Its subcellular location is the mitochondrion. The protein resides in the endoplasmic reticulum. Acts as a neurotrophic factor in postnatal mature neurons enhancing neuronal survival. Promotes cell proliferation and neurogenesis in undifferentiated neural progenitor cells at the embryonic stage and inhibits differentiation of astrocytes. Its neurotrophic activity is exerted via MAPK1/ERK2, MAPK3/ERK1 and AKT1/AKT pathways. Neurotrophic activity is enhanced by binding to heme. Also acts as an anorexigenic neurotrophic factor that contributes to energy balance. In Bos taurus (Bovine), this protein is Neudesin (NENF).